Reading from the N-terminus, the 304-residue chain is Rhodopsin (304 aa).

Topologically, residues 1 to 13 (YEYPQYYLVNPAA) are extracellular. Residues 14-38 (YAALGAYMFLLILVGFPINFLTLYV) traverse the membrane as a helical segment. The Cytoplasmic portion of the chain corresponds to 39 to 50 (TIEHKKLRTPLN). The chain crosses the membrane as a helical span at residues 51-73 (YILLNLAVANLFMVFGGFTTTMF). Over 74-87 (TSIRGYFVLGHLGC) the chain is Extracellular. Residues Cys-87 and Cys-164 are joined by a disulfide bond. A helical membrane pass occupies residues 88–110 (NLEGFFATLSGEIALWSLVVLAI). A 'Ionic lock' involved in activated form stabilization motif is present at residues 111–113 (ERW). Residues 111–129 (ERWVVVCKPISNFRFGENH) lie on the Cytoplasmic side of the membrane. Residues 130 to 150 (AIMGLAFTWTMAMACAAPPLV) traverse the membrane as a helical segment. The Extracellular segment spans residues 151–179 (GWSRYIPEGMQCSCGIDYYTRAEGFNNES). An N-linked (GlcNAc...) asparagine glycan is attached at Asn-177. A helical membrane pass occupies residues 180 to 201 (FVVYMFTCHFMTPLTIVFFCYG). Topologically, residues 202-229 (RLLCAVKEAAAAQQESETTQRAEREVTR) are cytoplasmic. Residues 230-251 (MVVIMVIAFLICWCPYAGVAWF) traverse the membrane as a helical segment. The Extracellular portion of the chain corresponds to 252–263 (IFTHQGSEFGPV). Residues 264-285 (FMTIPAFFAKSSSIYNPMIYIC) form a helical membrane-spanning segment. N6-(retinylidene)lysine is present on Lys-273. Over 286 to 304 (LNKQFRHCMITTLCCGKKA) the chain is Cytoplasmic. 2 S-palmitoyl cysteine lipidation sites follow: Cys-299 and Cys-300.

It belongs to the G-protein coupled receptor 1 family. Opsin subfamily. In terms of processing, phosphorylated on some or all of the serine and threonine residues present in the C-terminal region. Contains one covalently linked retinal chromophore.

The protein localises to the membrane. It localises to the cell projection. Its subcellular location is the cilium. The protein resides in the photoreceptor outer segment. Functionally, photoreceptor required for image-forming vision at low light intensity. While most salt water fish species use retinal as chromophore, most freshwater fish use 3-dehydroretinal, or a mixture of retinal and 3-dehydroretinal. Light-induced isomerization of 11-cis to all-trans retinal triggers a conformational change that activates signaling via G-proteins. Subsequent receptor phosphorylation mediates displacement of the bound G-protein alpha subunit by arrestin and terminates signaling. This Ictalurus punctatus (Channel catfish) protein is Rhodopsin (rho).